Reading from the N-terminus, the 269-residue chain is 3-methyl-2-oxobutanoate hydroxymethyltransferase (269 aa).

Mg(2+) contacts are provided by aspartate 48 and aspartate 87. 3-methyl-2-oxobutanoate-binding positions include 48–49 (DS), aspartate 87, and lysine 117. Glutamate 119 provides a ligand contact to Mg(2+). Glutamate 186 (proton acceptor) is an active-site residue.

Belongs to the PanB family. As to quaternary structure, homodecamer; pentamer of dimers. The cofactor is Mg(2+).

The protein localises to the cytoplasm. It catalyses the reaction 3-methyl-2-oxobutanoate + (6R)-5,10-methylene-5,6,7,8-tetrahydrofolate + H2O = 2-dehydropantoate + (6S)-5,6,7,8-tetrahydrofolate. The protein operates within cofactor biosynthesis; (R)-pantothenate biosynthesis; (R)-pantoate from 3-methyl-2-oxobutanoate: step 1/2. In terms of biological role, catalyzes the reversible reaction in which hydroxymethyl group from 5,10-methylenetetrahydrofolate is transferred onto alpha-ketoisovalerate to form ketopantoate. The sequence is that of 3-methyl-2-oxobutanoate hydroxymethyltransferase from Moorella thermoacetica (strain ATCC 39073 / JCM 9320).